Consider the following 330-residue polypeptide: Probable transposase for insertion sequence element ISH11 (330 aa).

The protein belongs to the transposase 11 family.

In terms of biological role, involved in the transposition of the insertion sequence ISH11. The polypeptide is Probable transposase for insertion sequence element ISH11 (Halobacterium salinarum (strain ATCC 29341 / DSM 671 / R1)).